The primary structure comprises 322 residues: MNFVNNLFTLKKISIKNISFFRSIIRIETFNNSFCDSLGNFIKRVIFLTTNSYKIIYLKIYKIKSEFYDLPGIIENTQTILKNLDNIIIKINNDNVANLIIKKKGPCIITAKDIFSDKNITIFNPNKIIANVSNNIVFYCIMKCVNSLFKNYTDEFFQFKIFKENIIFLNNFKSPIISLNYYINKKIFNKKLKKLFFDIETNGSIKPVDCFKNCIFYIKKYFDLIFSFIGFKKYKKINVEKKNNLNLKINSVYLNSINNLKLSIRSLNCLKNNNIFLIGDLIKISKNNLINIPNLGKKSYNEILNSLKNFGLNLNSKIEYDL.

An alpha N-terminal domain (alpha-NTD) region spans residues 1–229; it reads MNFVNNLFTL…KYFDLIFSFI (229 aa). The segment at 244–322 is alpha C-terminal domain (alpha-CTD); sequence NLNLKINSVY…NLNSKIEYDL (79 aa).

This sequence belongs to the RNA polymerase alpha chain family. As to quaternary structure, homodimer. The RNAP catalytic core consists of 2 alpha, 1 beta, 1 beta' and 1 omega subunit. When a sigma factor is associated with the core the holoenzyme is formed, which can initiate transcription.

The catalysed reaction is RNA(n) + a ribonucleoside 5'-triphosphate = RNA(n+1) + diphosphate. In terms of biological role, DNA-dependent RNA polymerase catalyzes the transcription of DNA into RNA using the four ribonucleoside triphosphates as substrates. In Carsonella ruddii (strain PV), this protein is DNA-directed RNA polymerase subunit alpha (rpoA).